A 170-amino-acid chain; its full sequence is Peptidyl-prolyl cis-trans isomerase ESS1 (170 aa).

The WW domain maps to 9 to 43 (TGLPTPWTVRYSKSKKREYFFNPETKHSQWEEPEG). The interval 30-53 (NPETKHSQWEEPEGTNKDQLHKHL) is disordered. Residues 32 to 53 (ETKHSQWEEPEGTNKDQLHKHL) show a composition bias toward basic and acidic residues. Residues 57 to 170 (PVRVRCLHIL…SGVHVIKRVG (114 aa)) enclose the PpiC domain. Residue serine 161 is modified to Phosphoserine.

Belongs to the PpiC/parvulin rotamase family. As to quaternary structure, interacts with the RNA polymerase II largest subunit (RPB1) and with the SIN1-RDP3 HDAC subunit SIN3.

Its subcellular location is the cytoplasm. It localises to the nucleus. It catalyses the reaction [protein]-peptidylproline (omega=180) = [protein]-peptidylproline (omega=0). Its activity is regulated as follows. Inhibited by 5-hydroxy-1,4-naphthoquinone (juglone), but not by FK506 or cyclosporin A. Essential PPIase specific for phosphoserine and phosphothreonine N-terminal to the proline residue. Required for efficient pre-mRNA 3'-end processing and transcription termination, probably by inducing conformational changes by proline-directed isomerization in the C-terminal domain (CTD) of RPB1, thereby altering cofactor binding with the RNA polymerase II transcription complex. Also targets the SIN3-RPD3 histone deacetylase complex (HDAC). The protein is Peptidyl-prolyl cis-trans isomerase ESS1 (ESS1) of Saccharomyces cerevisiae (strain ATCC 204508 / S288c) (Baker's yeast).